The chain runs to 391 residues: S-adenosylmethionine synthase (391 aa).

His14 serves as a coordination point for ATP. Asp16 serves as a coordination point for Mg(2+). Residue Glu42 participates in K(+) binding. 2 residues coordinate L-methionine: Glu55 and Gln98. Residues 98–108 form a flexible loop region; it reads QSADIAMGVDE. Residues 172-174, 238-239, Asp247, 253-254, Ala270, and Lys274 each bind ATP; these read DGK, RF, and RK. Asp247 lines the L-methionine pocket. Lys278 contributes to the L-methionine binding site.

Belongs to the AdoMet synthase family. As to quaternary structure, homotetramer; dimer of dimers. The cofactor is Mg(2+). K(+) serves as cofactor.

The protein resides in the cytoplasm. The enzyme catalyses L-methionine + ATP + H2O = S-adenosyl-L-methionine + phosphate + diphosphate. It participates in amino-acid biosynthesis; S-adenosyl-L-methionine biosynthesis; S-adenosyl-L-methionine from L-methionine: step 1/1. Catalyzes the formation of S-adenosylmethionine (AdoMet) from methionine and ATP. The overall synthetic reaction is composed of two sequential steps, AdoMet formation and the subsequent tripolyphosphate hydrolysis which occurs prior to release of AdoMet from the enzyme. In Clostridium botulinum (strain Alaska E43 / Type E3), this protein is S-adenosylmethionine synthase.